The primary structure comprises 350 residues: 8-amino-7-oxononanoate synthase (350 aa).

Pyridoxal 5'-phosphate is bound at residue 77-78 (GY). Residue H102 participates in substrate binding. Pyridoxal 5'-phosphate contacts are provided by residues S150, 175 to 178 (DDAH), and 204 to 207 (TLSK). K207 carries the N6-(pyridoxal phosphate)lysine modification. T316 serves as a coordination point for substrate.

This sequence belongs to the class-II pyridoxal-phosphate-dependent aminotransferase family. BioF subfamily. As to quaternary structure, homodimer. Requires pyridoxal 5'-phosphate as cofactor.

It carries out the reaction 6-carboxyhexanoyl-[ACP] + L-alanine + H(+) = (8S)-8-amino-7-oxononanoate + holo-[ACP] + CO2. It functions in the pathway cofactor biosynthesis; biotin biosynthesis. In terms of biological role, catalyzes the decarboxylative condensation of pimeloyl-[acyl-carrier protein] and L-alanine to produce 8-amino-7-oxononanoate (AON), [acyl-carrier protein], and carbon dioxide. This Methylocella silvestris (strain DSM 15510 / CIP 108128 / LMG 27833 / NCIMB 13906 / BL2) protein is 8-amino-7-oxononanoate synthase.